We begin with the raw amino-acid sequence, 126 residues long: UPF0212 protein TON_0350 (126 aa).

The protein belongs to the UPF0212 family.

The protein is UPF0212 protein TON_0350 of Thermococcus onnurineus (strain NA1).